The chain runs to 316 residues: Secondary metabolism regulator laeA (316 aa).

This sequence belongs to the methyltransferase superfamily. LaeA methyltransferase family. In terms of assembly, component of the heterotrimeric velvet complex composed of laeA, ve1 and velB; Ve1 acting as a bridging protein between laeA and velB. Interacts directly with veA.

It is found in the nucleus. Its subcellular location is the cytoplasm. It catalyses the reaction L-methionyl-[protein] + S-adenosyl-L-methionine = S-methyl-L-methionyl-[protein] + S-adenosyl-L-homocysteine. Functionally, methyltransferase that performs automethylation. No other methyl-accepting substrate has been identified yet. Component of the velvet transcription factor complex that acts as a global regulator for secondary metabolite gene expression. Controls the expression of the mycotoxins trichothecenes and zearalenon gene clusters. Negatively controls perithecial induction, but positively controls virulence toward the host plant. This chain is Secondary metabolism regulator laeA, found in Gibberella zeae (strain ATCC MYA-4620 / CBS 123657 / FGSC 9075 / NRRL 31084 / PH-1) (Wheat head blight fungus).